The following is a 206-amino-acid chain: MARYLGPKLKLSRREGTDLFLKSGVRAIDSKCKIDTAPGQHGARKPRLSDYGSQLREKQKVRRIYGILERQFRNYYKEANRLKGNTGENLLVLLEGRLDNVVYRMGFAATRAEARQLVSHKAIVVNGRVVNIPSFQVSVNDVVAIREKSKKQARIKASLELAEQREKPTWLEVDSAKMEGVFKRVPERSDLSADINEHLIVELYSK.

The S4 RNA-binding domain maps to G96–K156.

Belongs to the universal ribosomal protein uS4 family. In terms of assembly, part of the 30S ribosomal subunit. Contacts protein S5. The interaction surface between S4 and S5 is involved in control of translational fidelity.

One of the primary rRNA binding proteins, it binds directly to 16S rRNA where it nucleates assembly of the body of the 30S subunit. Its function is as follows. With S5 and S12 plays an important role in translational accuracy. This Haemophilus influenzae (strain 86-028NP) protein is Small ribosomal subunit protein uS4.